A 614-amino-acid chain; its full sequence is Serine/threonine-protein kinase Pkn1 (614 aa).

Residues 13-276 (YKVIAELGHG…TSGEQLQVTL (264 aa)) form the Protein kinase domain. Residues 19–27 (LGHGLWSRD) and lysine 42 contribute to the ATP site.

The protein belongs to the protein kinase superfamily. Ser/Thr protein kinase family. Interacts with PknD, interacts with and phosphorylates IncG. Autophosphorylates on serine and threonine residues. Present in elementary bodies 40 hours post-infection as 2 proteins of approximately 70 and 65 kDa; the smaller one may be due to differential phosphorylation or degradation.

It carries out the reaction L-seryl-[protein] + ATP = O-phospho-L-seryl-[protein] + ADP + H(+). It catalyses the reaction L-threonyl-[protein] + ATP = O-phospho-L-threonyl-[protein] + ADP + H(+). Together with the serine/threonine kinase PknD, may play a role in specific interactions with host proteins during host intracellular growth. Autophosphorylates and phosphorylates IncG, an inclusion-membrane protein required for the modification of the nascent chlamydial inclusion. The sequence is that of Serine/threonine-protein kinase Pkn1 (pkn1) from Chlamydia trachomatis serovar L2 (strain ATCC VR-902B / DSM 19102 / 434/Bu).